The chain runs to 185 residues: Crossover junction endodeoxyribonuclease RuvC (185 aa).

Active-site residues include Asp7, Glu66, and Asp137. Mg(2+)-binding residues include Asp7, Glu66, and Asp137.

It belongs to the RuvC family. In terms of assembly, homodimer which binds Holliday junction (HJ) DNA. The HJ becomes 2-fold symmetrical on binding to RuvC with unstacked arms; it has a different conformation from HJ DNA in complex with RuvA. In the full resolvosome a probable DNA-RuvA(4)-RuvB(12)-RuvC(2) complex forms which resolves the HJ. Requires Mg(2+) as cofactor.

The protein resides in the cytoplasm. The enzyme catalyses Endonucleolytic cleavage at a junction such as a reciprocal single-stranded crossover between two homologous DNA duplexes (Holliday junction).. Its function is as follows. The RuvA-RuvB-RuvC complex processes Holliday junction (HJ) DNA during genetic recombination and DNA repair. Endonuclease that resolves HJ intermediates. Cleaves cruciform DNA by making single-stranded nicks across the HJ at symmetrical positions within the homologous arms, yielding a 5'-phosphate and a 3'-hydroxyl group; requires a central core of homology in the junction. The consensus cleavage sequence is 5'-(A/T)TT(C/G)-3'. Cleavage occurs on the 3'-side of the TT dinucleotide at the point of strand exchange. HJ branch migration catalyzed by RuvA-RuvB allows RuvC to scan DNA until it finds its consensus sequence, where it cleaves and resolves the cruciform DNA. This Anaeromyxobacter dehalogenans (strain 2CP-1 / ATCC BAA-258) protein is Crossover junction endodeoxyribonuclease RuvC.